We begin with the raw amino-acid sequence, 382 residues long: Adenosine 3'-phospho 5'-phosphosulfate transporter 2 (382 aa).

Positions 1 to 10 are enriched in polar residues; sequence MSVSNRNGNG. The interval 1–33 is disordered; the sequence is MSVSNRNGNGSEVIYVGDRSTNRPPRNAPSPDE. The next 10 helical transmembrane spans lie at 56-76, 83-103, 121-141, 144-164, 170-190, 197-217, 234-254, 271-291, 299-319, and 323-343; these read LCCAGVFVLYLLYGYMQELIF, PYGWFLTLVQFAYYTVFGYVE, VLLAFLTLGTMGLSNSSLGYL, PTQVIFKCCKLVPVLIGSILI, GPLDFLAAIAMCLGLTLFTLA, NFNPFGVLLISLALLCDAAIG, VVIYSYGIGFVYLSVIMLLTG, FGYAFLFSLSGYLGIQIVLTL, LAATVTTARKAVTIALSFVFF, and FTINYLWSGLIVVLGIYLNVY.

Belongs to the nucleotide-sugar transporter family. SLC35B subfamily.

It localises to the golgi apparatus membrane. Its function is as follows. Mediates the transport of adenosine 3'-phospho 5'-phosphosulfate (PAPS), from cytosol into Golgi. PAPS is a universal sulfuryl donor for sulfation events that take place in the Golgi. Essential for viability. Involved in glycosaminoglycan synthesis and the subsequent signaling. May be involved in hh and dpp signaling by controlling the sulfation of heparan sulfate (HS). In Aedes aegypti (Yellowfever mosquito), this protein is Adenosine 3'-phospho 5'-phosphosulfate transporter 2.